The primary structure comprises 1274 residues: Regulator of telomere elongation helicase 1 (1274 aa).

A Helicase ATP-binding domain is found at asparagine 7 to glutamine 296. Serine 42 to threonine 49 provides a ligand contact to ATP. Cysteine 145, cysteine 163, cysteine 172, and cysteine 207 together coordinate [4Fe-4S] cluster. A Nuclear localization signal motif is present at residues lysine 151–valine 167. Residues aspartate 250 to histidine 253 carry the DEAH box motif. Residues glutamine 871–lysine 877 carry the Nuclear localization signal motif. 3 disordered regions span residues asparagine 982–leucine 1002, arginine 1014–aspartate 1038, and glutamate 1143–isoleucine 1198. Basic and acidic residues predominate over residues glutamine 1186–aspartate 1196.

This sequence belongs to the helicase family. RAD3/XPD subfamily. As to quaternary structure, interacts with TERF1. Interacts (via PIP-box) with PCNA; the interaction is direct and essential for suppressing telomere fragility. Interacts with MMS19; the interaction mediates the association of RTEL1 with the cytosolic iron-sulfur protein assembly (CIA) complex.

It localises to the nucleus. The enzyme catalyses ATP + H2O = ADP + phosphate + H(+). A probable ATP-dependent DNA helicase implicated in telomere-length regulation, DNA repair and the maintenance of genomic stability. Acts as an anti-recombinase to counteract toxic recombination and limit crossover during meiosis. Regulates meiotic recombination and crossover homeostasis by physically dissociating strand invasion events and thereby promotes noncrossover repair by meiotic synthesis dependent strand annealing (SDSA) as well as disassembly of D loop recombination intermediates. Also disassembles T loops and prevents telomere fragility by counteracting telomeric G4-DNA structures, which together ensure the dynamics and stability of the telomere. The polypeptide is Regulator of telomere elongation helicase 1 (Rtel1) (Rattus norvegicus (Rat)).